A 327-amino-acid chain; its full sequence is Phenylalanine--tRNA ligase alpha subunit (327 aa).

Mg(2+) is bound at residue Glu-252.

It belongs to the class-II aminoacyl-tRNA synthetase family. Phe-tRNA synthetase alpha subunit type 1 subfamily. Tetramer of two alpha and two beta subunits. It depends on Mg(2+) as a cofactor.

It localises to the cytoplasm. The catalysed reaction is tRNA(Phe) + L-phenylalanine + ATP = L-phenylalanyl-tRNA(Phe) + AMP + diphosphate + H(+). This is Phenylalanine--tRNA ligase alpha subunit from Cronobacter sakazakii (strain ATCC BAA-894) (Enterobacter sakazakii).